The sequence spans 124 residues: Predicted GPI-anchored protein 11 (124 aa).

The signal sequence occupies residues 1–18 (MKFQFVTALALASTMAVA). Residues 38-59 (REGGSTGAELQDNNQPTAGLFG) form a disordered region. Ser107 carries the GPI-anchor amidated serine lipid modification. A propeptide spans 108–124 (GAAGGVGNLFSGILGGL) (removed in mature form).

Its subcellular location is the cell membrane. This Candida albicans (strain SC5314 / ATCC MYA-2876) (Yeast) protein is Predicted GPI-anchored protein 11 (PGA11).